A 241-amino-acid chain; its full sequence is Hydantoin racemase (241 aa).

The protein belongs to the HyuE racemase family. In terms of assembly, homotetramer.

It catalyses the reaction a D-5-monosubstituted hydantoin = a L-5-monosubstituted hydantoin. It carries out the reaction D-5-benzylhydantoin = L-5-benzylhydantoin. The enzyme catalyses D-5-isobutylhydantoin = L-5-isobutylhydantoin. Its activity is regulated as follows. Inhibited by Cu(2+), Hg(2+), Pb(2+) and Zn(2+). The activity is twofold lower in the presence of Mn(2+), Co(2+) and Ni(2+). The insignificant effect of the metal chelating agent EDTA on the hydantoin racemase activity would indicate that it is not a metalloenzyme. May be involved in the asymmetric conversion of racemic 5-substituted hydantoins to the corresponding L-amino acids. Catalyzes the racemization via enolization of D- and L-5-monosubstituted hydantoins. This chain is Hydantoin racemase, found in Rhizobium meliloti (Ensifer meliloti).